The primary structure comprises 383 residues: MSRHEGVSCDACLKGNFRGRRYKCLICYDYDLCASCYESGATTTRHTTEHPMQCILTRVDFDLYYGGEAFSVEQPQSFTCPYCGKMGYTETSLQEHVTSEHAETSTEVICPICAALPGGDPNHVTDDFAAHLTLEHRAPRDLDESSGVRHVRRMFHPGRGLGGPRARRTNMHFTSSSTGGLSSSQSSSYSPSNREAMDPIAELLSQLSGVRRSAGGQLNSSGPSASQLQQLQMQLQLERQQAQAARQQLETARNATRQRSNPSNISASIPPPSTATNTAMTESNPLASHSSQFLLTRLNEPKMSEAERQALESERADRSLFVQELLLSTLMREESSSSDEDERRDFADFGAMGCVDIMPLDVALESLNLKESSTGKEPPPPPL.

The ZZ-type zinc-finger motif lies at 4-60 (HEGVSCDACLKGNFRGRRYKCLICYDYDLCASCYESGATTTRHTTEHPMQCILTRVD). C9, C12, C24, C27, C33, C36, H46, and H50 together coordinate Zn(2+). A C2H2-type zinc finger spans residues 78–101 (FTCPYCGKMGYTETSLQEHVTSEH). Disordered regions lie at residues 141–194 (DLDE…PSNR) and 242–289 (AQAA…LASH). 2 stretches are compositionally biased toward low complexity: residues 175–192 (SSST…YSPS) and 260–279 (SNPS…TNTA). Positions 224–261 (SASQLQQLQMQLQLERQQAQAARQQLETARNATRQRSN) form a coiled coil. Residues 280–289 (MTESNPLASH) show a composition bias toward polar residues.

The protein belongs to the KCMF1 family. As to quaternary structure, component of the SIFI complex, composed of kcmf1, ubr4 and calmodulin.

It localises to the cytoplasm. The protein localises to the late endosome. It is found in the lysosome. The enzyme catalyses S-ubiquitinyl-[E2 ubiquitin-conjugating enzyme]-L-cysteine + [acceptor protein]-L-lysine = [E2 ubiquitin-conjugating enzyme]-L-cysteine + N(6)-ubiquitinyl-[acceptor protein]-L-lysine.. The protein operates within protein modification; protein ubiquitination. In terms of biological role, E3 ubiquitin-protein ligase which accepts ubiquitin from an E2 ubiquitin-conjugating enzyme and then transfers it to targeted substrates, promoting their degradation by the proteasome. Together with UBR4, component of the N-end rule pathway: ubiquitinates proteins bearing specific N-terminal residues that are destabilizing according to the N-end rule, leading to their degradation. Does not ubiquitinate proteins that are acetylated at the N-terminus. Together with ubr4, part of a protein quality control pathway that catalyzes ubiquitination and degradation of proteins that have been oxidized in response to reactive oxygen species (ROS): recognizes proteins with an Arg-CysO3(H) degron at the N-terminus, and mediates assembly of heterotypic 'Lys-63'-/'Lys-27'-linked branched ubiquitin chains on oxidized proteins, leading to their degradation by autophagy. Catalytic component of the SIFI complex, a multiprotein complex required to inhibit the mitochondrial stress response after a specific stress event has been resolved: ubiquitinates and degrades (1) components of the HRI-mediated signaling of the integrated stress response, such as dele1 and eif2ak1/hri, as well as (2) unimported mitochondrial precursors. Within the SIFI complex, ubr4 initiates ubiquitin chain that are further elongated or branched by kcmf1. The polypeptide is E3 ubiquitin-protein ligase KCMF1 (kcmf1) (Danio rerio (Zebrafish)).